The chain runs to 1423 residues: Fructan beta-fructosidase (1423 aa).

Residues 1 to 39 form the signal peptide; it reads MEEETVCKNWFMRKSGKSWIFGCAVFFVLGLATALPVAA. The interval 44 to 161 is disordered; the sequence is QTTAADTAVT…TNLEDMSHDT (118 aa). Residues 69–126 are compositionally biased toward polar residues; sequence AVTETTQSEGTASKQLTTPAVADQTTEPTDNEPISSSDGASSPYQVTDTTEPQQTLTP. Substrate is bound by residues 455 to 458, glutamine 474, 513 to 514, 581 to 582, and aspartate 783; these read WAND, FS, and RD. Aspartate 458 is an active-site residue. Positions 867-871 are involved in binding of sugars with beta-(2,6) linkages or binding of molecular weight fructans; the sequence is ASVEV. One can recognise a BIG2 domain in the interval 924–1002; that stretch reads PVAMNTTTAK…SKENPSLSKT (79 aa). Over residues 1368–1385 the composition is skewed to polar residues; sequence DVNSVQQTEPSVMSSSPK. Positions 1368-1394 are disordered; the sequence is DVNSVQQTEPSVMSSSPKATLPDTGDH. An LPXTG sorting signal motif is present at residues 1388–1392; it reads LPDTG. Threonine 1391 is modified (pentaglycyl murein peptidoglycan amidated threonine). Residues 1392-1423 constitute a propeptide, removed by sortase; that stretch reads GDHKTDLSQLGVLAMIGSFLVEIAGYFKKRKD.

It belongs to the glycosyl hydrolase 32 family.

It is found in the secreted. The protein localises to the cell wall. The enzyme catalyses Hydrolysis of terminal, non-reducing (2-&gt;1)- and (2-&gt;6)-linked beta-D-fructofuranose residues in fructans.. Its function is as follows. This protein is a fructanase enzyme which degrades levans and inulins to fructose and also cleaves sucrose into glucose and fructose and can therefore function as an extracellular invertase. This is Fructan beta-fructosidase (fruA) from Streptococcus mutans serotype c (strain ATCC 700610 / UA159).